The primary structure comprises 95 residues: Lipolysis-activating peptide 1-beta chain (95 aa).

A signal peptide spans 1–22 (MISVQVIFIAFISIIAFSMVCG). In terms of domain architecture, LCN-type CS-alpha/beta spans 23–91 (GNVFPNRELG…FLNALEKQCP (69 aa)). Cystine bridges form between Cys-37–Cys-60, Cys-45–Cys-70, and Cys-49–Cys-72.

As to quaternary structure, homodimer; disulfide-linked or monomer (edited version) or heterodimer of an alpha chain (AC P84810) and this beta chain (non-edited version). In terms of tissue distribution, expressed by the venom gland.

The protein resides in the secreted. In terms of biological role, the homodimer inhibits HMG-CoA reductase (HMGCR) (32% of inhibition produced by 0.6 uM), a glycoprotein involved in the control of cholesterol biosynthesis. The inhibitory effects of bumarsin are seen at much lower concentrations (0.6 uM) than that for statins such as atorvastatin (5 mM) and simvastatin (10 uM). In addition to inhibition of HMG-CoA reductase, this protein lowers cholesterol levels by inducing steroid hormone synthesis via StAR, and by increasing reverse cholesterol transport mediated by the induction of ABCA1 and APOA1. The heterodimer non-edited LVP1 induces lipolysis in rat adipocytes. Induction of lipolysis by LVP1 appears to be mediated through the beta-2 adrenergic receptor pathway (ADRB2). Intracerebroventricular injection is not toxic to mice. Its function is as follows. The monomer edited version, similar to alpha-toxins, may modulate voltage-gated sodium channels (Nav) and may block voltage-gated potassium channels (Kv). This chain is Lipolysis-activating peptide 1-beta chain, found in Buthus occitanus tunetanus (Common European scorpion).